Consider the following 211-residue polypeptide: Bcl-2-related ovarian killer protein homolog B (211 aa).

Residues 32–44 (KELCRDFIHSRIT) carry the BH4 motif. Positions 67–83 (VSVVLLKLGDELECMRP) match the BH3 motif. Residues 113-132 (EVIAMGITWGKVVAIYAVAA) carry the BH1 motif. The BH2 motif lies at 165-179 (WLKKRGGWVDILKCV). The chain crosses the membrane as a helical span at residues 190–210 (WLSTAVLTWREFIKTMYVYLT).

The protein belongs to the Bcl-2 family. As to expression, expressed strongly in ovary and more weakly in eye. Little expression in other tissues examined.

Its subcellular location is the membrane. Its function is as follows. May play a role in apoptosis. Does not appear to show pro-apoptotic activity when expressed ectopically in early embryos. This Danio rerio (Zebrafish) protein is Bcl-2-related ovarian killer protein homolog B (bokb).